The following is a 99-amino-acid chain: Acylphosphatase (99 aa).

In terms of domain architecture, Acylphosphatase-like spans 5–97; the sequence is VRQVTVQGRV…RPGERFSTLP (93 aa). Active-site residues include R20 and N38.

It belongs to the acylphosphatase family.

It catalyses the reaction an acyl phosphate + H2O = a carboxylate + phosphate + H(+). The polypeptide is Acylphosphatase (acyP) (Rhodopseudomonas palustris (strain BisB18)).